The sequence spans 449 residues: Ribosomal protein uS12 methylthiotransferase RimO (449 aa).

In terms of domain architecture, MTTase N-terminal spans 16 to 126 (PKISFVSLGC…VMEAVHAAIA (111 aa)). The [4Fe-4S] cluster site is built by Cys-25, Cys-61, Cys-90, Cys-157, Cys-161, and Cys-164. Residues 143 to 381 (LTPRHYAYLK…MEHQQKISAR (239 aa)) enclose the Radical SAM core domain. The TRAM domain occupies 384 to 449 (REKIGKHVSV…DAYDLHGKAV (66 aa)).

It belongs to the methylthiotransferase family. RimO subfamily. [4Fe-4S] cluster is required as a cofactor.

Its subcellular location is the cytoplasm. It catalyses the reaction L-aspartate(89)-[ribosomal protein uS12]-hydrogen + (sulfur carrier)-SH + AH2 + 2 S-adenosyl-L-methionine = 3-methylsulfanyl-L-aspartate(89)-[ribosomal protein uS12]-hydrogen + (sulfur carrier)-H + 5'-deoxyadenosine + L-methionine + A + S-adenosyl-L-homocysteine + 2 H(+). Catalyzes the methylthiolation of an aspartic acid residue of ribosomal protein uS12. This chain is Ribosomal protein uS12 methylthiotransferase RimO, found in Beijerinckia indica subsp. indica (strain ATCC 9039 / DSM 1715 / NCIMB 8712).